Consider the following 310-residue polypeptide: Prohibitin-2 (310 aa).

The helical; Signal-anchor for type II membrane protein transmembrane segment at 38–58 (FAGLGGLLLLGGGALFINNAL) threads the bilayer. An interaction with ATG8 region spans residues 130-144 (DVVQLPTIYRTLGQD). The AIM signature appears at 138 to 141 (YRTL). Positions 212 to 253 (NAVEAKQIAQQDAQRAAFVVDKARQEKQGMVVRAQGEAKSAE) form a coiled coil.

The protein belongs to the prohibitin family. As to quaternary structure, the mitochondrial prohibitin complex consists of two subunits (PHB1 and PHB2). The subunits assemble into a membrane-associated ring-shaped supercomplex of approximately 1 mDa. The mitochondrial prohibitin complex interacts with the m-AAA protease, a heterohexamer composed of YTA12/RCA1 and YTA10/AFG3. The mitochondrial prohibitin complex interacts with ATG8 and the interaction may support mitophagosome assembly. In terms of processing, the N-terminus is blocked.

It is found in the mitochondrion inner membrane. Prohibitin probably acts as a holdase/unfoldase for the stabilization of newly synthesized mitochondrial proteins. Involved in mitophagy; may act as an adapter for ATG8 that supports mitophagosome assembly. Negatively regulates the proteolytic processing of ATG32 via the i-AAA protease. Acts as a negative regulator of the m-AAA protease. The chain is Prohibitin-2 (PHB2) from Saccharomyces cerevisiae (strain ATCC 204508 / S288c) (Baker's yeast).